A 174-amino-acid polypeptide reads, in one-letter code: Repair DNA polymerase X (174 aa).

The tract at residues 42–51 (REEKMLNDVD) is involved in ssDNA binding. Residues D49 and D51 each coordinate Mg(2+). C81 and C86 are oxidised to a cystine. Mg(2+) is bound at residue D100.

Belongs to the DNA polymerase type-X family. The cofactor is Mg(2+).

Its subcellular location is the virion. The catalysed reaction is DNA(n) + a 2'-deoxyribonucleoside 5'-triphosphate = DNA(n+1) + diphosphate. Its function is as follows. Error-prone polymerase lacking a proofreading 3'-5' exonuclease which catalyzes the gap-filling reaction during the DNA repair process. Specifically binds intermediates in the single-nucleotide base-excision repair process. Also catalyzes DNA polymerization with low nucleotide-insertion fidelity. Probably acts as a strategic DNA mutase, which gives rise to a rapid emergence of variants. Generates mismatched G-G pairs, in that case, the polymerase first binds the deoxynucleotide followed by mismatch formation. Together with the viral DNA ligase, fills the single nucleotide gaps generated by the AP endonuclease. Binds DNA with high affinity via the helix alphaE. This Ornithodoros (relapsing fever ticks) protein is Repair DNA polymerase X.